Reading from the N-terminus, the 205-residue chain is Small ribosomal subunit protein uS5 (205 aa).

The 64-residue stretch at 49-112 (LEDEVLDIAM…TKAKMNLVKV (64 aa)) folds into the S5 DRBM domain.

The protein belongs to the universal ribosomal protein uS5 family. As to quaternary structure, part of the 30S ribosomal subunit. Contacts protein S4.

Functionally, with S4 and S12 plays an important role in translational accuracy. The chain is Small ribosomal subunit protein uS5 from Methanoregula boonei (strain DSM 21154 / JCM 14090 / 6A8).